A 248-amino-acid polypeptide reads, in one-letter code: Membrane-spanning 4-domains subfamily A member 6A (248 aa).

Residues 1–46 are Cytoplasmic-facing; it reads MTSQPVPNETIIVLPSNVINFSQAEKPEPTNQGQDSLKKHLHAEIK. Residues 47-67 form a helical membrane-spanning segment; sequence VIGTIQILCGMMVLSLGIILA. Residues 68–84 are Extracellular-facing; that stretch reads SASFSPNFTQVTSTLLN. The helical transmembrane segment at 85 to 105 threads the bilayer; sequence SAYPFIGPFFFIISGSLSIAT. At 106-116 the chain is on the cytoplasmic side; the sequence is EKRLTKLLVHS. A helical transmembrane segment spans residues 117-137; it reads SLVGSILSALSALVGFIILSV. Residues 138–185 are Extracellular-facing; the sequence is KQATLNPASLQCELDKNNIPTRSYVSYFYHDSLYTTDCYTAKASLAGT. A helical membrane pass occupies residues 186–206; sequence LSLMLICTLLEFCLAVLTAVL. The Cytoplasmic segment spans residues 207–248; it reads RWKQAYSDFPGSVLFLPHSYIGNSGMSSKMTHDCGYEELLTS.

This sequence belongs to the MS4A family. Variable expression in some B-cell, myelomonocytic, and erythroleukemia cell lines.

The protein localises to the membrane. In terms of biological role, may be involved in signal transduction as a component of a multimeric receptor complex. This Homo sapiens (Human) protein is Membrane-spanning 4-domains subfamily A member 6A (MS4A6A).